The sequence spans 26 residues: DNA-binding transcriptional regulator NtrC (26 aa).

The Response regulatory domain maps to 4–26; the sequence is TILVADDDAAIRTVLNQALSRAG.

Phosphorylated and dephosphorylated by NtrB.

The protein localises to the cytoplasm. Member of the two-component regulatory system NtrB/NtrC, which controls expression of the nitrogen-regulated (ntr) genes in response to nitrogen limitation. Phosphorylated NtrC binds directly to DNA and stimulates the formation of open promoter-sigma54-RNA polymerase complexes. The sequence is that of DNA-binding transcriptional regulator NtrC (ntrC) from Rhizobium leguminosarum bv. phaseoli.